The primary structure comprises 403 residues: Stearoyl-[acyl-carrier-protein] 9-desaturase 4, chloroplastic (403 aa).

A chloroplast-targeting transit peptide spans 1–44 (MALLLNSTMTVAMKQNPATAVSFMQTTCLGSSFSPPRHLQVSCV). Residues E140, E178, H181, E231, E264, and H267 each contribute to the Fe cation site.

The protein belongs to the fatty acid desaturase type 2 family. In terms of assembly, homodimer. Fe(2+) is required as a cofactor. Preferentially expressed in roots.

It localises to the plastid. It is found in the chloroplast. It carries out the reaction octadecanoyl-[ACP] + 2 reduced [2Fe-2S]-[ferredoxin] + O2 + 2 H(+) = (9Z)-octadecenoyl-[ACP] + 2 oxidized [2Fe-2S]-[ferredoxin] + 2 H2O. Its pathway is lipid metabolism; fatty acid metabolism. Its function is as follows. Converts stearoyl-ACP to oleoyl-ACP by introduction of a cis double bond between carbons 9 and 10 of the acyl chain. This is Stearoyl-[acyl-carrier-protein] 9-desaturase 4, chloroplastic (S-ACP-DES4) from Arabidopsis thaliana (Mouse-ear cress).